Reading from the N-terminus, the 269-residue chain is 4-hydroxy-tetrahydrodipicolinate reductase (269 aa).

Residues 11–16 (GGSGRM) and Glu37 each bind NAD(+). Residue Arg38 participates in NADP(+) binding. NAD(+)-binding positions include 101–103 (GTT) and 125–128 (AGNM). Catalysis depends on His158, which acts as the Proton donor/acceptor. A (S)-2,3,4,5-tetrahydrodipicolinate-binding site is contributed by His159. Lys162 (proton donor) is an active-site residue. 168 to 169 (GT) contacts (S)-2,3,4,5-tetrahydrodipicolinate.

The protein belongs to the DapB family.

It is found in the cytoplasm. The enzyme catalyses (S)-2,3,4,5-tetrahydrodipicolinate + NAD(+) + H2O = (2S,4S)-4-hydroxy-2,3,4,5-tetrahydrodipicolinate + NADH + H(+). It carries out the reaction (S)-2,3,4,5-tetrahydrodipicolinate + NADP(+) + H2O = (2S,4S)-4-hydroxy-2,3,4,5-tetrahydrodipicolinate + NADPH + H(+). It participates in amino-acid biosynthesis; L-lysine biosynthesis via DAP pathway; (S)-tetrahydrodipicolinate from L-aspartate: step 4/4. Catalyzes the conversion of 4-hydroxy-tetrahydrodipicolinate (HTPA) to tetrahydrodipicolinate. This is 4-hydroxy-tetrahydrodipicolinate reductase from Dinoroseobacter shibae (strain DSM 16493 / NCIMB 14021 / DFL 12).